Reading from the N-terminus, the 505-residue chain is Photosystem II CP47 reaction center protein (505 aa).

Residues 1 to 19 (GLPWYRVHTVLINDPGRLI) are Cytoplasmic-facing. Residues His-8, His-22, His-25, His-99, and His-113 each contribute to the chlorophyll a site. Residues 20-35 (AAHLMHTALVAGWAGS) traverse the membrane as a helical segment. Residues 36 to 99 (MALYELATFD…WSFEGVALAH (64 aa)) lie on the Lumenal side of the membrane. Residues 100–114 (IVLSGLLFLAACWHW) form a helical membrane-spanning segment. Topologically, residues 115–138 (VYWDLELFRDPRTGEPALDLPKMF) are cytoplasmic. The helical transmembrane segment at 139-155 (GIHLFLAGLLCFGFGAF) threads the bilayer. Residues His-141, His-156, His-200, His-201, and His-215 each contribute to the chlorophyll a site. Over 156–201 (HLTGLFGPGMWVSDPYGLTGSVQPVAPEWGPDGFNPYNPGGVVAHH) the chain is Lumenal. Residues 202 to 217 (IAAGIVGIIAGLFHIL) traverse the membrane as a helical segment. Residues 218-235 (VRPPQRLYKALRMGNIET) are Cytoplasmic-facing. The chain crosses the membrane as a helical span at residues 236 to 251 (VLSSSIAAVFFAAFVV). Over 252-455 (AGTMWYGSAT…PRGWFTFAHA (204 aa)) the chain is Lumenal. Positions 454, 465, and 468 each coordinate chlorophyll a. A helical membrane pass occupies residues 456–471 (VFALLFFFGHIWHGAR). Residues 472–505 (TLFRDVFSGIDPELSPEQVEWGFYQKVGDVTTRK) are Cytoplasmic-facing.

This sequence belongs to the PsbB/PsbC family. PsbB subfamily. In terms of assembly, PSII is composed of 1 copy each of membrane proteins PsbA, PsbB, PsbC, PsbD, PsbE, PsbF, PsbH, PsbI, PsbJ, PsbK, PsbL, PsbM, PsbT, PsbX, PsbY, PsbZ, Psb30/Ycf12, peripheral proteins PsbO, CyanoQ (PsbQ), PsbU, PsbV and a large number of cofactors. It forms dimeric complexes. The cofactor is Binds multiple chlorophylls. PSII binds additional chlorophylls, carotenoids and specific lipids..

The protein resides in the cellular thylakoid membrane. One of the components of the core complex of photosystem II (PSII). It binds chlorophyll and helps catalyze the primary light-induced photochemical processes of PSII. PSII is a light-driven water:plastoquinone oxidoreductase, using light energy to abstract electrons from H(2)O, generating O(2) and a proton gradient subsequently used for ATP formation. This chain is Photosystem II CP47 reaction center protein, found in Thermostichus vulcanus (Synechococcus vulcanus).